Here is a 226-residue protein sequence, read N- to C-terminus: Probable endolytic peptidoglycan transglycosylase RlpA (226 aa).

Residues 1 to 26 (MERFLGFRTPLGALGVVILLTLILSS) form the signal peptide. A lipid anchor (N-palmitoyl cysteine) is attached at cysteine 27. Residue cysteine 27 is the site of S-diacylglycerol cysteine attachment.

This sequence belongs to the RlpA family.

It is found in the cell membrane. Lytic transglycosylase with a strong preference for naked glycan strands that lack stem peptides. The polypeptide is Probable endolytic peptidoglycan transglycosylase RlpA (Aquifex aeolicus (strain VF5)).